Reading from the N-terminus, the 123-residue chain is Large ribosomal subunit protein uL14 (123 aa).

Belongs to the universal ribosomal protein uL14 family. Part of the 50S ribosomal subunit. Forms a cluster with proteins L3 and L19. In the 70S ribosome, L14 and L19 interact and together make contacts with the 16S rRNA in bridges B5 and B8.

Binds to 23S rRNA. Forms part of two intersubunit bridges in the 70S ribosome. This chain is Large ribosomal subunit protein uL14, found in Proteus mirabilis (strain HI4320).